A 208-amino-acid polypeptide reads, in one-letter code: Outer-membrane lipoprotein carrier protein (208 aa).

Residues 1–22 (MKNLLCAVMLTSPLLYSTAVFA) form the signal peptide.

The protein belongs to the LolA family. As to quaternary structure, monomer.

It is found in the periplasm. Participates in the translocation of lipoproteins from the inner membrane to the outer membrane. Only forms a complex with a lipoprotein if the residue after the N-terminal Cys is not an aspartate (The Asp acts as a targeting signal to indicate that the lipoprotein should stay in the inner membrane). This Shewanella putrefaciens (strain CN-32 / ATCC BAA-453) protein is Outer-membrane lipoprotein carrier protein.